Here is a 265-residue protein sequence, read N- to C-terminus: Neuronal membrane glycoprotein M6-b (265 aa).

Residues 31–51 (GGVPYASLVATILCFSGVALF) form a helical membrane-spanning segment. N-linked (GlcNAc...) asparagine glycosylation occurs at Asn-73. A run of 2 helical transmembrane segments spans residues 90–110 (VIYG…AEGF) and 136–156 (FVFL…FSAV). N-linked (GlcNAc...) asparagine glycosylation is present at Asn-177. Residues 224-244 (LFIVACAGAGATVIALLIYMM) form a helical membrane-spanning segment. A Phosphoserine modification is found at Ser-257.

It belongs to the myelin proteolipid protein family. Interacts with SERT. As to expression, neurons and glia; cerebellar Bergmann glia, in glia within white matter tracts of the cerebellum and cerebrum, and in embryonic dorsal root ganglia.

It localises to the cell membrane. Its function is as follows. May be involved in neural development. Involved in regulation of osteoblast function and bone formation. Involved in matrix vesicle release by osteoblasts; this function seems to involve maintenance of the actin cytoskeleton. May be involved in cellular trafficking of SERT and thereby in regulation of serotonin uptake. The protein is Neuronal membrane glycoprotein M6-b (GPM6B) of Homo sapiens (Human).